Here is a 691-residue protein sequence, read N- to C-terminus: Histone-lysine N-methyltransferase Set8 (691 aa).

5 disordered regions span residues 1–22 (MIMVRRRARPAKETGGGSAAAA), 211–234 (RSGLRDSHSSSHSSSSSGGASATT), 345–381 (PAAGGGAGAAARRRKPATPHRILCPSPIKTLPRGDGG), 422–450 (SRRRLNQPKPQAPYQPQQPQPPPGTQPTN), and 484–516 (APAKPRAALTKGSKTKTGSKIQPGPLPLAATNG). The segment covering 220 to 232 (SSHSSSSSGGASA) has biased composition (low complexity). Pro residues predominate over residues 431 to 446 (PQAPYQPQQPQPPPGT). Over residues 484–503 (APAKPRAALTKGSKTKTGSK) the composition is skewed to low complexity. An SET domain is found at 555–676 (EGLQVRNFMG…PGEELTYDYG (122 aa)). S-adenosyl-L-methionine-binding positions include 565-567 (KGR), Tyr610, and 637-638 (NH).

It belongs to the class V-like SAM-binding methyltransferase superfamily. Histone-lysine methyltransferase family. PR/SET subfamily.

It is found in the nucleus. Its subcellular location is the chromosome. It catalyses the reaction L-lysyl(20)-[histone H4] + S-adenosyl-L-methionine = N(6)-methyl-L-lysyl(20)-[histone H4] + S-adenosyl-L-homocysteine + H(+). In terms of biological role, histone methyltransferase that specifically monomethylates 'Lys-20' of histone H4. H4 'Lys-20' monomethylation is enriched during mitosis and represents a specific tag for epigenetic transcriptional repression. Mainly functions in euchromatin regions, thereby playing a central role in the silencing of euchromatic genes. Required for cell proliferation, possibly by contributing to the maintenance of proper higher-order structure of DNA and chromosome condensation during mitosis. This chain is Histone-lysine N-methyltransferase Set8, found in Drosophila pseudoobscura pseudoobscura (Fruit fly).